A 566-amino-acid polypeptide reads, in one-letter code: Phosphatidylinositol 3,4,5-trisphosphate 3-phosphatase TPTE2 (566 aa).

The next 4 membrane-spanning stretches (helical) occupy residues 135–155, 173–193, 208–228, and 234–254; these read SFAF…LLLA, ISLA…FVEG, AIIV…IKFL, and WIHL…HLIH. The 177-residue stretch at 272-448 folds into the Phosphatase tensin-type domain; it reads RRYTRDGFDL…GYFAQVKHLY (177 aa). Cys-382 functions as the Phosphocysteine intermediate in the catalytic mechanism. The 112-residue stretch at 455–566 folds into the C2 tensin-type domain; sequence RRILFIKRFI…ILHSFRLVFT (112 aa).

The protein resides in the endoplasmic reticulum membrane. Its subcellular location is the golgi apparatus membrane. It carries out the reaction a 1,2-diacyl-sn-glycero-3-phospho-(1D-myo-inositol-3,4,5-trisphosphate) + H2O = a 1,2-diacyl-sn-glycero-3-phospho-(1D-myo-inositol-4,5-bisphosphate) + phosphate. In terms of biological role, acts as a lipid phosphatase, removing the phosphate in the D3 position of the inositol ring from phosphatidylinositol 3,4,5-trisphosphate. The sequence is that of Phosphatidylinositol 3,4,5-trisphosphate 3-phosphatase TPTE2 (TPTE2) from Macaca fascicularis (Crab-eating macaque).